Here is a 240-residue protein sequence, read N- to C-terminus: UDP-2,3-diacylglucosamine hydrolase (240 aa).

Mn(2+) contacts are provided by D8, H10, D41, N79, and H114. 79-80 (NR) is a binding site for substrate. D122, S160, N164, K167, and H195 together coordinate substrate. Residues H195 and H197 each contribute to the Mn(2+) site.

This sequence belongs to the LpxH family. The cofactor is Mn(2+).

The protein localises to the cell inner membrane. The catalysed reaction is UDP-2-N,3-O-bis[(3R)-3-hydroxytetradecanoyl]-alpha-D-glucosamine + H2O = 2-N,3-O-bis[(3R)-3-hydroxytetradecanoyl]-alpha-D-glucosaminyl 1-phosphate + UMP + 2 H(+). It participates in glycolipid biosynthesis; lipid IV(A) biosynthesis; lipid IV(A) from (3R)-3-hydroxytetradecanoyl-[acyl-carrier-protein] and UDP-N-acetyl-alpha-D-glucosamine: step 4/6. In terms of biological role, hydrolyzes the pyrophosphate bond of UDP-2,3-diacylglucosamine to yield 2,3-diacylglucosamine 1-phosphate (lipid X) and UMP by catalyzing the attack of water at the alpha-P atom. Involved in the biosynthesis of lipid A, a phosphorylated glycolipid that anchors the lipopolysaccharide to the outer membrane of the cell. The sequence is that of UDP-2,3-diacylglucosamine hydrolase from Escherichia coli (strain SE11).